We begin with the raw amino-acid sequence, 298 residues long: Probable 2-(5''-triphosphoribosyl)-3'-dephosphocoenzyme-A synthase 2 (298 aa).

This sequence belongs to the CitG/MdcB family.

It catalyses the reaction 3'-dephospho-CoA + ATP = 2'-(5''-triphospho-alpha-D-ribosyl)-3'-dephospho-CoA + adenine. The chain is Probable 2-(5''-triphosphoribosyl)-3'-dephosphocoenzyme-A synthase 2 from Salmonella choleraesuis (strain SC-B67).